An 806-amino-acid polypeptide reads, in one-letter code: Ankyrin repeat, bromo and BTB domain-containing protein DDB_G0293800 (806 aa).

ANK repeat units lie at residues 1–30 (MSNKTLPYCCEHGLKDEVIALLAKGEDVNQ), 34–63 (SNRYPLHYAAIGGYIEIVAMLLERGALVNC), 67–96 (RGATPLHYASRGGRIECIQLLIDNKADVNC), 100–130 (AGSTPLHTALQCNETKCAIALIETFGADVNL), and 134–163 (EGSTALHLASARGLVPVIVALLENGARADV). The span at 210-228 (GVGKKEDDDNNMKIDKQES) shows a compositional bias: basic and acidic residues. Residues 210-231 (GVGKKEDDDNNMKIDKQESEQQ) are disordered. In terms of domain architecture, BTB spans 239–307 (SDITFLIENQ…IYTGSIEKFE (69 aa)). 2 disordered regions span residues 423 to 517 (TRTA…SDSM) and 621 to 743 (QNFP…EERR). Low complexity-rich tracts occupy residues 426 to 436 (ANANASNSNQS) and 443 to 511 (TSTT…SSSS). One can recognise a Bromo domain in the interval 516-622 (SMNEKNLTFC…NAFDQKFLQN (107 aa)). Residues 626-641 (EKPPTYKPPPPTPTPI) show a composition bias toward pro residues. The span at 642–658 (PTQQQQQQSTSSTSTPT) shows a compositional bias: low complexity. Basic and acidic residues predominate over residues 666 to 675 (DEHVKVKEDT). A compositionally biased stretch (polar residues) spans 676-693 (NSAQPTSSSSNHTNGENA). Residues 694–733 (SSSSSSSSSKQSNNNNNNNNNNNSNSTTNSSSSSSSTTTT) show a composition bias toward low complexity. An NET domain is found at 727-806 (SSSTTTTQKK…ECFKKQKQDE (80 aa)).

The polypeptide is Ankyrin repeat, bromo and BTB domain-containing protein DDB_G0293800 (Dictyostelium discoideum (Social amoeba)).